The sequence spans 501 residues: Beta-secretase 1 (501 aa).

The N-terminal stretch at methionine 1–glycine 21 is a signal peptide. A propeptide spanning residues threonine 22–arginine 45 is cleaved from the precursor. Residues threonine 22 to threonine 457 lie on the Extracellular side of the membrane. The segment at leucine 39–glycine 58 is disordered. Residues tyrosine 75–alanine 416 form the Peptidase A1 domain. Aspartate 93 is an active-site residue. Residue lysine 126 is modified to N6-acetyllysine. N-linked (GlcNAc...) asparagine glycosylation is found at asparagine 153, asparagine 172, and asparagine 223. Disulfide bonds link cysteine 216-cysteine 420, cysteine 278-cysteine 443, and cysteine 330-cysteine 380. Residues lysine 275, lysine 279, and lysine 285 each carry the N6-acetyllysine modification. The active site involves aspartate 289. Residues lysine 299, lysine 300, and lysine 307 each carry the N6-acetyllysine modification. An N-linked (GlcNAc...) asparagine glycan is attached at asparagine 354. The helical transmembrane segment at isoleucine 458 to cysteine 478 threads the bilayer. Residues cysteine 474, cysteine 478, cysteine 482, and cysteine 485 are each lipidated (S-palmitoyl cysteine). Residues glutamine 479–lysine 501 are Cytoplasmic-facing. Residues glutamine 479–lysine 501 are interaction with RTN3. The DXXLL motif lies at aspartate 496–leucine 500. Serine 498 carries the post-translational modification Phosphoserine. A Glycyl lysine isopeptide (Lys-Gly) (interchain with G-Cter in ubiquitin) cross-link involves residue lysine 501.

It belongs to the peptidase A1 family. Monomer. Interacts (via DXXLL motif) with GGA1, GGA2 and GGA3 (via their VHS domain); the interaction highly increases when BACE1 is phosphorylated at Ser-498. Interacts with RTN1; RTN2; RTN3 and RTN4; the interaction leads to inhibition of amyloid precursor protein processing. Interacts with SNX6. Interacts with PCSK9. Interacts with NAT8 and NAT8B. Interacts with BIN1. Interacts (via extracellular domain) with ADAM10 (via extracellular domain). Interacts with SORL1; this interaction may affect binding with APP and hence reduce APP cleavage. Interacts with NRDC AND NRG1. In terms of processing, N-Glycosylated. Addition of a bisecting N-acetylglucosamine by MGAT3 blocks lysosomal targeting, further degradation and is required for maintaining stability under stress conditions. Acetylated in the endoplasmic reticulum at Lys-126, Lys-275, Lys-279, Lys-285, Lys-299, Lys-300 and Lys-307. Acetylation by NAT8 and NAT8B is transient and deacetylation probably occurs in the Golgi. Acetylation regulates the maturation, the transport to the plasma membrane, the stability and the expression of the protein. Post-translationally, palmitoylation mediates lipid raft localization. In terms of processing, ubiquitinated at Lys-501, ubiquitination leads to lysosomal degradation. Monoubiquitinated and 'Lys-63'-linked polyubitinated. Deubiquitnated by USP8; inhibits lysosomal degradation. Phosphorylation at Ser-498 is required for interaction with GGA1 and retrograded transport from endosomal compartments to the trans-Golgi network. Non-phosphorylated BACE1 enters a direct recycling route to the cell surface. Expressed at high levels in the brain and pancreas. In the brain, expression is highest in the substantia nigra, locus coruleus and medulla oblongata.

The protein localises to the cell membrane. It is found in the golgi apparatus. Its subcellular location is the trans-Golgi network. The protein resides in the endoplasmic reticulum. It localises to the endosome. The protein localises to the cell surface. It is found in the cytoplasmic vesicle membrane. Its subcellular location is the membrane raft. The protein resides in the lysosome. It localises to the late endosome. The protein localises to the early endosome. It is found in the recycling endosome. Its subcellular location is the cell projection. The protein resides in the axon. It localises to the dendrite. The catalysed reaction is Broad endopeptidase specificity. Cleaves Glu-Val-Asn-Leu-|-Asp-Ala-Glu-Phe in the Swedish variant of Alzheimer's amyloid precursor protein.. With respect to regulation, inhibited by RTN3 and RTN4. Responsible for the proteolytic processing of the amyloid precursor protein (APP). Cleaves at the N-terminus of the A-beta peptide sequence, between residues 671 and 672 of APP, leads to the generation and extracellular release of beta-cleaved soluble APP, and a corresponding cell-associated C-terminal fragment which is later released by gamma-secretase. Cleaves CHL1. The chain is Beta-secretase 1 from Homo sapiens (Human).